The following is a 162-amino-acid chain: Functional amyloid chaperone FapA (162 aa).

The signal sequence occupies residues 1-28; that stretch reads MSGSSLRIVVPALLVIVGSVPVSLPAHA.

Belongs to the FapA family. As to quaternary structure, monomer in solution. Interacts with FapC but not FapB in vitro.

Its subcellular location is the periplasm. Its function is as follows. An intrinsically disordered chaperone for fibril amyloid FapC that guards against fibrillation within the periplasm. Upon overexpression of the endogenous six-gene locus (fapA-fapF), cells form large clumps during liquid growth, make large amounts of biofilm and produce amyloid fibrils. In Pseudomonas aeruginosa (strain ATCC 15692 / DSM 22644 / CIP 104116 / JCM 14847 / LMG 12228 / 1C / PRS 101 / PAO1), this protein is Functional amyloid chaperone FapA.